Consider the following 695-residue polypeptide: Polyribonucleotide nucleotidyltransferase (695 aa).

2 residues coordinate Mg(2+): aspartate 486 and aspartate 492. A KH domain is found at 553–612; the sequence is PRIETMQINTSKIATVIGPGGKQIRQIIERSGAQVDINDDGVINIAASTQESINKAKELI. One can recognise an S1 motif domain in the interval 622-690; it reads GKVYNGRVTS…EKGQLKLSHK (69 aa).

It belongs to the polyribonucleotide nucleotidyltransferase family. It depends on Mg(2+) as a cofactor.

The protein localises to the cytoplasm. It catalyses the reaction RNA(n+1) + phosphate = RNA(n) + a ribonucleoside 5'-diphosphate. In terms of biological role, involved in mRNA degradation. Catalyzes the phosphorolysis of single-stranded polyribonucleotides processively in the 3'- to 5'-direction. The chain is Polyribonucleotide nucleotidyltransferase from Chlamydia trachomatis serovar A (strain ATCC VR-571B / DSM 19440 / HAR-13).